Reading from the N-terminus, the 500-residue chain is MAIFDNYEVWFVIGSQHLYGPETLRQVTQHAEHVVNALNTEAKLPYKLVLKPLGTTPDEITAICRDANYDDRCAGLVVWLHTFSPAKMWINGLTMLNKPLLQFHTQFNAALPWDSIDMDFMNLNQTAHGGREFGFIGARMRQQHAVVTGHWQDKQAHERIGSWMRQAVSKQDTRHLKVCRFGDNMREVAVTDGDKVAAQIKFGFSVNTWAVGYLVQVVNSISDGDVNALVDEYESCYTMTPATQIHGEKRQNVLEAARIELGMKRFLEQGGFHAFTTTFEDLHGLKQLPGLPVQRLMQQGYGFAGEGDWKTAALLRIMKVMSTGLQGGTSFMEDYTYHFEKGNDLVLGSHMLEVCPSIAVEEKPILDVQHLGIGGKDDPARLIFNTQTGPAIVASLIDLGDRYRLLVNCIDTVKTPHSLPKLPVANALWKAQPDLPTASEAWILAGGAHHTVFSHALNLNDMRQFAEMHDIEITVIDNDTRLPAFKDALRWNEVYYGFRR.

Residues glutamate 306, glutamate 333, histidine 350, and histidine 450 each coordinate Mn(2+).

It belongs to the arabinose isomerase family. Homohexamer. The cofactor is Mn(2+).

The catalysed reaction is beta-L-arabinopyranose = L-ribulose. It participates in carbohydrate degradation; L-arabinose degradation via L-ribulose; D-xylulose 5-phosphate from L-arabinose (bacterial route): step 1/3. Functionally, catalyzes the conversion of L-arabinose to L-ribulose. The chain is L-arabinose isomerase from Shigella flexneri.